Consider the following 401-residue polypeptide: Mu-type opioid receptor (401 aa).

Residues 1-69 (MDSGAVPTNA…CPSAGSPSMI (69 aa)) lie on the Extracellular side of the membrane. Residues Asn9, Asn12, Asn34, Asn41, and Asn49 are each glycosylated (N-linked (GlcNAc...) asparagine). A helical transmembrane segment spans residues 70-94 (TAIIIMALYSIVCVVGLFGNFLVMY). Topologically, residues 95-107 (VIVRYTKMKTATN) are cytoplasmic. A helical transmembrane segment spans residues 108–132 (IYIFNLALADALATSTLPFQSVNYL). Topologically, residues 133-143 (MGTWPFGTILC) are extracellular. Cysteines 143 and 220 form a disulfide. Residues 144–166 (KIVISIDYYNMFTSIFTLCTMSV) traverse the membrane as a helical segment. Topologically, residues 167–186 (DRYIAVCHPVKALDLRTPRN) are cytoplasmic. Position 169 is a phosphotyrosine (Tyr169). A helical transmembrane segment spans residues 187 to 208 (AKIINICNWILSSAIGLPVMFM). Residues 209–231 (ATTKYRQGSIDCTLTFSHPTWYW) lie on the Extracellular side of the membrane. Residues 232–256 (ENLLKICVFIFAFIMPILIITVCYG) form a helical membrane-spanning segment. Topologically, residues 257-280 (LMILRLKSVRMLSGSKEKDRNLRR) are cytoplasmic. A helical membrane pass occupies residues 281–307 (ITRMVLVVVAVFIVCWTPIHIYVIIKA). At 308 to 315 (LITIPETT) the chain is on the extracellular side. The chain crosses the membrane as a helical span at residues 316–339 (FQTVSWHFCIALGYTNSCLNPVLY). Positions 335–339 (NPVLY) match the NPxxY; plays a role in stabilizing the activated conformation of the receptor motif. Over 340-401 (AFLDENFKRC…NLEAETTPLP (62 aa)) the chain is Cytoplasmic. Cys354 carries S-palmitoyl cysteine lipidation. Positions 365-389 (NSTRIRQNTRDHPSTANTVDRTNHQ) are disordered. Position 366 is a phosphoserine (Ser366). Thr373 carries the phosphothreonine modification. Ser378 carries the phosphoserine modification. Position 397 is a phosphothreonine (Thr397).

The protein belongs to the G-protein coupled receptor 1 family. Forms homooligomers and heterooligomers with other GPCRs, such as OPRD1, OPRK1, OPRL1, NPFFR2, ADRA2A, SSTR2, CNR1 and CCR5 (probably in dimeric forms). Interacts with heterotrimeric G proteins; interaction with a heterotrimeric complex containing GNAI1, GNB1 and GNG2 stabilizes the active conformation of the receptor and increases its affinity for endomorphin-2, the synthetic opioid peptide DAMGO and for morphinan agonists. Interacts with PPL; the interaction disrupts agonist-mediated G-protein activation. Interacts (via C-terminus) with DNAJB4 (via C-terminus). Interacts with calmodulin; the interaction inhibits the constitutive activity of OPRM1; it abolishes basal and attenuates agonist-stimulated G-protein coupling. Interacts with FLNA, PLD2, RANBP9 and WLS and GPM6A. Interacts with RTP4. Interacts with SYP and GNAS. Interacts with RGS9, RGS17, RGS20, RGS4, PPP1R9B and HINT1. Post-translationally, phosphorylated. Differentially phosphorylated in basal and agonist-induced conditions. Agonist-mediated phosphorylation modulates receptor internalization. Phosphorylated by GRK2 in a agonist-dependent manner. Phosphorylation at Tyr-169 requires receptor activation, is dependent on non-receptor protein tyrosine kinase Src and results in a decrease in agonist efficacy by reducing G-protein coupling efficiency. Phosphorylated on tyrosine residues; the phosphorylation is involved in agonist-induced G-protein-independent receptor down-regulation. Phosphorylation at Ser-378 is involved in G-protein-dependent but not beta-arrestin-dependent activation of the ERK pathway. In terms of processing, ubiquitinated. A basal ubiquitination seems not to be related to degradation. Ubiquitination is increased upon formation of OPRM1:OPRD1 oligomers leading to proteasomal degradation; the ubiquitination is diminished by RTP4.

The protein resides in the cell membrane. It localises to the cell projection. The protein localises to the axon. Its subcellular location is the perikaryon. It is found in the dendrite. The protein resides in the endosome. In terms of biological role, receptor for endogenous opioids such as beta-endorphin and endomorphin. Receptor for natural and synthetic opioids including morphine, heroin, DAMGO, fentanyl, etorphine, buprenorphin and methadone. Also activated by enkephalin peptides, such as Met-enkephalin or Met-enkephalin-Arg-Phe, with higher affinity for Met-enkephalin-Arg-Phe. Agonist binding to the receptor induces coupling to an inactive GDP-bound heterotrimeric G-protein complex and subsequent exchange of GDP for GTP in the G-protein alpha subunit leading to dissociation of the G-protein complex with the free GTP-bound G-protein alpha and the G-protein beta-gamma dimer activating downstream cellular effectors. The agonist- and cell type-specific activity is predominantly coupled to pertussis toxin-sensitive G(i) and G(o) G alpha proteins, GNAI1, GNAI2, GNAI3 and GNAO1, and to a lesser extent to pertussis toxin-insensitive G alpha proteins GNAZ and GNA15. They mediate an array of downstream cellular responses, including inhibition of adenylate cyclase activity and both N-type and L-type calcium channels, activation of inward rectifying potassium channels, mitogen-activated protein kinase (MAPK), phospholipase C (PLC), phosphoinositide/protein kinase (PKC), phosphoinositide 3-kinase (PI3K) and regulation of NF-kappa-B. Also couples to adenylate cyclase stimulatory G alpha proteins. The selective temporal coupling to G-proteins and subsequent signaling can be regulated by RGSZ proteins, such as RGS9, RGS17 and RGS4. Phosphorylation by members of the GPRK subfamily of Ser/Thr protein kinases and association with beta-arrestins is involved in short-term receptor desensitization. Beta-arrestins associate with the GPRK-phosphorylated receptor and uncouple it from the G-protein thus terminating signal transduction. The phosphorylated receptor is internalized through endocytosis via clathrin-coated pits which involves beta-arrestins. The activation of the ERK pathway occurs either in a G-protein-dependent or a beta-arrestin-dependent manner and is regulated by agonist-specific receptor phosphorylation. Acts as a class A G-protein coupled receptor (GPCR) which dissociates from beta-arrestin at or near the plasma membrane and undergoes rapid recycling. Receptor down-regulation pathways are varying with the agonist and occur dependent or independent of G-protein coupling. Endogenous ligands induce rapid desensitization, endocytosis and recycling. Heterooligomerization with other GPCRs can modulate agonist binding, signaling and trafficking properties. Involved in neurogenesis. The polypeptide is Mu-type opioid receptor (OPRM1) (Bos taurus (Bovine)).